Reading from the N-terminus, the 175-residue chain is Ribosome maturation factor RimM (175 aa).

Residues 99-171 (AGEYYWFQLK…RILFDLPDGL (73 aa)) form the PRC barrel domain.

The protein belongs to the RimM family. Binds ribosomal protein uS19.

The protein localises to the cytoplasm. In terms of biological role, an accessory protein needed during the final step in the assembly of 30S ribosomal subunit, possibly for assembly of the head region. Essential for efficient processing of 16S rRNA. May be needed both before and after RbfA during the maturation of 16S rRNA. It has affinity for free ribosomal 30S subunits but not for 70S ribosomes. The chain is Ribosome maturation factor RimM from Syntrophotalea carbinolica (strain DSM 2380 / NBRC 103641 / GraBd1) (Pelobacter carbinolicus).